Reading from the N-terminus, the 96-residue chain is Co-chaperonin GroES (96 aa).

Belongs to the GroES chaperonin family. In terms of assembly, heptamer of 7 subunits arranged in a ring. Interacts with the chaperonin GroEL.

The protein resides in the cytoplasm. Functionally, together with the chaperonin GroEL, plays an essential role in assisting protein folding. The GroEL-GroES system forms a nano-cage that allows encapsulation of the non-native substrate proteins and provides a physical environment optimized to promote and accelerate protein folding. GroES binds to the apical surface of the GroEL ring, thereby capping the opening of the GroEL channel. The chain is Co-chaperonin GroES from Polynucleobacter asymbioticus (strain DSM 18221 / CIP 109841 / QLW-P1DMWA-1) (Polynucleobacter necessarius subsp. asymbioticus).